Consider the following 124-residue polypeptide: Small ribosomal subunit protein bS6 (124 aa).

Residues 99–124 are disordered; it reads PLPAPRVMPGSEAAQQQQAEAAASAD. Over residues 109 to 124 the composition is skewed to low complexity; it reads SEAAQQQQAEAAASAD.

Belongs to the bacterial ribosomal protein bS6 family.

Functionally, binds together with bS18 to 16S ribosomal RNA. This chain is Small ribosomal subunit protein bS6, found in Synechococcus sp. (strain CC9605).